Reading from the N-terminus, the 236-residue chain is Probable 2-phosphosulfolactate phosphatase (236 aa).

This sequence belongs to the ComB family. Requires Mg(2+) as cofactor.

The catalysed reaction is (2R)-O-phospho-3-sulfolactate + H2O = (2R)-3-sulfolactate + phosphate. In Gloeobacter violaceus (strain ATCC 29082 / PCC 7421), this protein is Probable 2-phosphosulfolactate phosphatase.